The chain runs to 422 residues: Enolase (422 aa).

(2R)-2-phosphoglycerate is bound at residue Gln-162. Glu-204 (proton donor) is an active-site residue. Asp-241, Glu-284, and Asp-311 together coordinate Mg(2+). Lys-336, Arg-365, Ser-366, and Lys-387 together coordinate (2R)-2-phosphoglycerate. Lys-336 (proton acceptor) is an active-site residue.

This sequence belongs to the enolase family. Mg(2+) is required as a cofactor.

It localises to the cytoplasm. It is found in the secreted. Its subcellular location is the cell surface. It catalyses the reaction (2R)-2-phosphoglycerate = phosphoenolpyruvate + H2O. Its pathway is carbohydrate degradation; glycolysis; pyruvate from D-glyceraldehyde 3-phosphate: step 4/5. Catalyzes the reversible conversion of 2-phosphoglycerate (2-PG) into phosphoenolpyruvate (PEP). It is essential for the degradation of carbohydrates via glycolysis. The chain is Enolase from Thermus thermophilus (strain ATCC 27634 / DSM 579 / HB8).